The following is a 74-amino-acid chain: Alpha-conotoxin GeXIVA (74 aa).

The N-terminal stretch at Met1–Ala22 is a signal peptide. Residues Val23 to Lys46 constitute a propeptide that is removed on maturation. The segment at Arg56 to Arg64 is interacts with alpha-9-alpha-10 (CHRNA9-CHRNA10) nAChR.

The protein belongs to the conotoxin O1 superfamily. In terms of processing, the native disulfide bond pairing has not been studied. Three isomers may exist: the bead isomer (I-II; III-IV), the globular isomer (I-III; II-IV), the ribbon isomer (I-IV; II-III). They have all been synthesized and their activity tested. All of them show similar potency on alpha-9-alpha-10 (CHRNA9-CHRNA10) nAChR, showing that disulfide bonds does not significantly affect their activity. In addition, removal of disulfide bonds does not affect the activity on alpha-9-alpha-10 (CHRNA9-CHRNA10) nAChR either. In terms of tissue distribution, expressed by the venom duct.

Its subcellular location is the secreted. Alpha-conotoxins act on postsynaptic membranes, they bind to the nicotinic acetylcholine receptors (nAChR) and thus inhibit them. This toxin is very potent on alpha-9-alpha-10/CHRNA9-CHRNA10 nAChR (IC(50)=4.61-12 nM for the bead isomer (I-II; III-IV), IC(50)=7-16 nM for the ribbon isomer (I-IV; II-III) and IC(50)=22.7 nM for the globular isomer (I-III; II-IV)). The bead isomer also shows a weak inhibition on other nAChRs (alpha-1-beta-1-delta-epsilon/CHRNA1-CHRNB1-CHRND-CHRNE, alpha-7/CHRNA7, alpha-6/alpha-3-beta-2-beta-3 (CHRNA6/CHRNA3-CHRNB2-CHRNB3), alpha-3-beta-2/CHRNA3-CHRNB2, alpha-2-beta-2/CHRNA2-CHRNB2, alpha-6/alpha-3-beta-4 (CHRNA6/CHRNA3-CHRNB4), alpha-4-beta-2/CHRNA4-CHRNB2, alpha-4-beta-4/CHRNA4-CHRNB4, alpha-2-beta-4/CHRNA2-CHRNB4, alpha-3-beta-4/CHRNA3-CHRNB4). The toxin blockade is voltage-dependent, and its binding site does not overlap with the binding site of the competitive antagonist alpha-conotoxin RgIA. The toxin inhibits Sf9 cell growth. Both the bead and ribbon isomers relieve pain effects in the rat chronic constriction injury (CCI) model of neuropathic pain, and in the acute pain model of tail flick test, but have no effect on motor performance. The polypeptide is Alpha-conotoxin GeXIVA (Conus generalis (General cone)).